Reading from the N-terminus, the 311-residue chain is MAAGLCPGRALLSRRGGALWALLGTARGRAAGPETHFGFQNVSEAERREKIYQVFENVAEKYDVMNDSMSLGIHRVWKDILVHKMNPSPGTLLVDVAGGTGDIAFRFLNYVRSVRERQLQQKLRHHQNLSWQEISKSYQEEKSNPLGDSQVVVCDINKEMLKAGKQKAQHLGYSEGLSWVLGNAEELHFDDDKFDVYTIAFGIRNVTRIDLALQEAYRVLKPGGRFLCLEFSHVSNPLLSRLYDLYSFQVIPVLGEVIAGDWKSYQYLVESIRRFPPQEELKAMIEDAGFLKVDYQNLNSGIVAIHSGFKL.

A mitochondrion-targeting transit peptide spans 1–29; the sequence is MAAGLCPGRALLSRRGGALWALLGTARGR. S-adenosyl-L-methionine-binding positions include Thr-100, Asp-155, and 183–184; that span reads NA.

Belongs to the class I-like SAM-binding methyltransferase superfamily. MenG/UbiE family. As to quaternary structure, component of a multi-subunit COQ enzyme complex, composed of at least COQ3, COQ4, COQ5, COQ6, COQ7 and COQ9.

Its subcellular location is the mitochondrion inner membrane. The enzyme catalyses a 2-methoxy-6-(all-trans-polyprenyl)benzene-1,4-diol + S-adenosyl-L-methionine = a 5-methoxy-2-methyl-3-(all-trans-polyprenyl)benzene-1,4-diol + S-adenosyl-L-homocysteine + H(+). The protein operates within cofactor biosynthesis; ubiquinone biosynthesis. In terms of biological role, methyltransferase required for the conversion of 2-polyprenyl-6-methoxy-1,4-benzoquinol (DDMQH2) to 2-polyprenyl-3-methyl-6-methoxy-1,4-benzoquinol (DMQH2). The sequence is that of 2-methoxy-6-polyprenyl-1,4-benzoquinol methylase, mitochondrial from Gallus gallus (Chicken).